A 586-amino-acid polypeptide reads, in one-letter code: Exopolysaccharide phosphotransferase SCO6023 (586 aa).

It belongs to the stealth family.

In Streptomyces coelicolor (strain ATCC BAA-471 / A3(2) / M145), this protein is Exopolysaccharide phosphotransferase SCO6023.